The primary structure comprises 150 residues: D-aminoacyl-tRNA deacylase (150 aa).

Positions Gly136–Pro137 match the Gly-cisPro motif, important for rejection of L-amino acids motif.

Belongs to the DTD family. Homodimer.

The protein resides in the cytoplasm. It catalyses the reaction glycyl-tRNA(Ala) + H2O = tRNA(Ala) + glycine + H(+). The catalysed reaction is a D-aminoacyl-tRNA + H2O = a tRNA + a D-alpha-amino acid + H(+). In terms of biological role, an aminoacyl-tRNA editing enzyme that deacylates mischarged D-aminoacyl-tRNAs. Also deacylates mischarged glycyl-tRNA(Ala), protecting cells against glycine mischarging by AlaRS. Acts via tRNA-based rather than protein-based catalysis; rejects L-amino acids rather than detecting D-amino acids in the active site. By recycling D-aminoacyl-tRNA to D-amino acids and free tRNA molecules, this enzyme counteracts the toxicity associated with the formation of D-aminoacyl-tRNA entities in vivo and helps enforce protein L-homochirality. The polypeptide is D-aminoacyl-tRNA deacylase (Macrococcus caseolyticus (strain JCSC5402) (Macrococcoides caseolyticum)).